Reading from the N-terminus, the 500-residue chain is FAD-linked oxidoreductase easE (500 aa).

An FAD-binding PCMH-type domain is found at 37 to 220; the sequence is QGRIPLFTVG…TRATMRVFPD (184 aa).

It belongs to the oxygen-dependent FAD-linked oxidoreductase family. FAD is required as a cofactor.

Its pathway is alkaloid biosynthesis; ergot alkaloid biosynthesis. In terms of biological role, FAD-linked oxidoreductase; part of the gene cluster that mediates the biosynthesis of fungal ergot alkaloid. DmaW catalyzes the first step of ergot alkaloid biosynthesis by condensing dimethylallyl diphosphate (DMAP) and tryptophan to form 4-dimethylallyl-L-tryptophan. The second step is catalyzed by the methyltransferase easF that methylates 4-dimethylallyl-L-tryptophan in the presence of S-adenosyl-L-methionine, resulting in the formation of 4-dimethylallyl-L-abrine. The catalase easC and the FAD-dependent oxidoreductase easE then transform 4-dimethylallyl-L-abrine to chanoclavine-I which is further oxidized by easD in the presence of NAD(+), resulting in the formation of chanoclavine-I aldehyde. Chanoclavine-I aldehyde is the precursor of ergoamides and ergopeptines in Clavicipitaceae, and clavine-type alcaloids such as fumiclavine in Trichocomaceae. However, the metabolites downstream of chanoclavine-I aldehyde in Arthrodermataceae have not been identified yet. This Arthroderma benhamiae (strain ATCC MYA-4681 / CBS 112371) (Trichophyton mentagrophytes) protein is FAD-linked oxidoreductase easE.